Here is a 509-residue protein sequence, read N- to C-terminus: Ribonuclease Y (509 aa).

Residues 1 to 21 (MIILVAVVTAVISFGLGYVVA) traverse the membrane as a helical segment. Positions 199 to 259 (TVSTVSLPSD…IRREIARLTL (61 aa)) constitute a KH domain. Positions 325 to 418 (VLDHSIEVAQ…VAAADALSAA (94 aa)) constitute an HD domain.

This sequence belongs to the RNase Y family.

Its subcellular location is the cell membrane. Endoribonuclease that initiates mRNA decay. The chain is Ribonuclease Y from Pseudothermotoga lettingae (strain ATCC BAA-301 / DSM 14385 / NBRC 107922 / TMO) (Thermotoga lettingae).